The chain runs to 134 residues: Profilin-2 (134 aa).

The cysteines at positions 13 and 118 are disulfide-linked. An Involved in PIP2 interaction motif is present at residues 84 to 100 (AVTRGKKGTGGITIKKT). Residue Thr114 is modified to Phosphothreonine.

Belongs to the profilin family. In terms of assembly, occurs in many kinds of cells as a complex with monomeric actin in a 1:1 ratio. Phosphorylated by MAP kinases.

The protein localises to the cytoplasm. It localises to the cytoskeleton. Binds to actin and affects the structure of the cytoskeleton. At high concentrations, profilin prevents the polymerization of actin, whereas it enhances it at low concentrations. The sequence is that of Profilin-2 from Olea europaea (Common olive).